Reading from the N-terminus, the 519-residue chain is ATP synthase subunit alpha (519 aa).

Residue 175-182 (GDRQTGKT) coordinates ATP.

It belongs to the ATPase alpha/beta chains family. As to quaternary structure, F-type ATPases have 2 components, CF(1) - the catalytic core - and CF(0) - the membrane proton channel. CF(1) has five subunits: alpha(3), beta(3), gamma(1), delta(1), epsilon(1). CF(0) has three main subunits: a(1), b(2) and c(9-12). The alpha and beta chains form an alternating ring which encloses part of the gamma chain. CF(1) is attached to CF(0) by a central stalk formed by the gamma and epsilon chains, while a peripheral stalk is formed by the delta and b chains.

Its subcellular location is the cell inner membrane. The enzyme catalyses ATP + H2O + 4 H(+)(in) = ADP + phosphate + 5 H(+)(out). In terms of biological role, produces ATP from ADP in the presence of a proton gradient across the membrane. The alpha chain is a regulatory subunit. The polypeptide is ATP synthase subunit alpha (Acinetobacter baylyi (strain ATCC 33305 / BD413 / ADP1)).